A 180-amino-acid chain; its full sequence is uncharacterized protein (180 aa).

The N-terminal stretch at 1-21 is a signal peptide; that stretch reads MKQCIAFMAILALSLSAISEA. The tract at residues 23–81 is disordered; that stretch reads GGRGVRSSGYSRPVATKPAPAPKQTQTQQQSQQPDATFGQQNMQNTATNTPNNPNNRLA. The span at 27 to 78 shows a compositional bias: low complexity; the sequence is VRSSGYSRPVATKPAPAPKQTQTQQQSQQPDATFGQQNMQNTATNTPNNPNN.

This is an uncharacterized protein from Pasteurella multocida (strain Pm70).